We begin with the raw amino-acid sequence, 251 residues long: Probable transcriptional regulatory protein Arth_2304 (251 aa).

This sequence belongs to the TACO1 family.

It localises to the cytoplasm. The protein is Probable transcriptional regulatory protein Arth_2304 of Arthrobacter sp. (strain FB24).